The sequence spans 295 residues: Trimeric intracellular cation channel type A (295 aa).

The Lumenal segment spans residues 1–18; sequence MELLSALSLGELALSFSR. The helical transmembrane segment at 19–39 threads the bilayer; the sequence is VPLFPVFDLSYFIVSILYLKY. At 40–51 the chain is on the cytoplasmic side; that stretch reads EPGAVELSRRHP. The helical transmembrane segment at 52–72 threads the bilayer; it reads VASWLCAMLHCFGSYILADLL. The Lumenal portion of the chain corresponds to 73-85; the sequence is LGEPLIDYFSNNS. Gly74 serves as a coordination point for Ca(2+). The helical transmembrane segment at 86–106 threads the bilayer; that stretch reads SILLASAVWYLIFFCPLDLFY. Topologically, residues 107–144 are cytoplasmic; the sequence is KCVCFLPVKLIFVAMKEVVRVRKIAVGIHHAHHHYHHG. Lys122 and Arg126 together coordinate a 1,2-diacyl-sn-glycero-3-phospho-(1D-myo-inositol-4,5-bisphosphate). A helical transmembrane segment spans residues 145–165; the sequence is WFIMIATGWVKGSGVALLSNV. Residues 166 to 178 lie on the Lumenal side of the membrane; it reads EQLLRGVWKPETN. Residues 179–199 traverse the membrane as a helical segment; it reads EILHMSFPTKASLYGAILFTL. The Cytoplasmic portion of the chain corresponds to 200–209; sequence QQTRWLPVSK. A helical membrane pass occupies residues 210 to 230; it reads ASLIFIFTMFMVSCKVFLTAT. The Lumenal segment spans residues 231 to 234; sequence HSHS. A helical membrane pass occupies residues 235–255; it reads SPFDVLEAYVCPVLFGTGSGG. At 256 to 295 the chain is on the cytoplasmic side; that stretch reads DHPQDNHGAWPGGPPSGALATKSKEELSEGSRKKKTKKAD. A disordered region spans residues 256–295; the sequence is DHPQDNHGAWPGGPPSGALATKSKEELSEGSRKKKTKKAD. Positions 277–286 are enriched in basic and acidic residues; that stretch reads KSKEELSEGS.

It belongs to the TMEM38 family. As to quaternary structure, homotrimer; conformation seems to be controled by binding to diacylglycerol (DAG).

Its subcellular location is the sarcoplasmic reticulum membrane. The protein resides in the nucleus membrane. It carries out the reaction K(+)(in) = K(+)(out). Its activity is regulated as follows. Channel activity is activated by a change of voltage within the sarcoplasmic reticulum lumen and blocked by luminal high Ca(2+) levels. Functionally, intracellular monovalent cation channel required for maintenance of rapid intracellular calcium release. Acts as a potassium counter-ion channel that functions in synchronization with calcium release from intracellular stores. Opened by a change of voltage within the sarcoplasmic reticulum lumen. The protein is Trimeric intracellular cation channel type A of Oryctolagus cuniculus (Rabbit).